The sequence spans 776 residues: 1,4-alpha-glucan branching enzyme GlgB (776 aa).

Aspartate 431 functions as the Nucleophile in the catalytic mechanism. The active-site Proton donor is the glutamate 484.

It belongs to the glycosyl hydrolase 13 family. GlgB subfamily. Monomer.

It catalyses the reaction Transfers a segment of a (1-&gt;4)-alpha-D-glucan chain to a primary hydroxy group in a similar glucan chain.. It participates in glycan biosynthesis; glycogen biosynthesis. Its function is as follows. Catalyzes the formation of the alpha-1,6-glucosidic linkages in glycogen by scission of a 1,4-alpha-linked oligosaccharide from growing alpha-1,4-glucan chains and the subsequent attachment of the oligosaccharide to the alpha-1,6 position. This Trichodesmium erythraeum (strain IMS101) protein is 1,4-alpha-glucan branching enzyme GlgB.